We begin with the raw amino-acid sequence, 280 residues long: Keratin, type I cytoskeletal 47 kDa (280 aa).

The segment at 1–81 is head; that stretch reads MSFRSSSSYS…SSSFSSFGGN (81 aa). A coil 1A region spans residues 82–117; that stretch reads DKQTMQNLNDRLASYLEKVRALEAANADLELKIREW. Residues 82 to 280 enclose the IF rod domain; sequence DKQTMQNLND…RDAELWFNQK (199 aa). Residues 118-139 form a linker 1 region; the sequence is YEKQKGSGIGAASKDFSKYFEI. Residues 140-231 are coil 1B; the sequence is ISDLRNKILF…KNHEEEMSIA (92 aa). The tract at residues 232-254 is linker 12; the sequence is KGSAAGQVTVEMDAAPGVDLNKI. The interval 255–280 is coil 2; the sequence is LSDMRADYETLAEKNRRDAELWFNQK.

It belongs to the intermediate filament family. Heterotetramer of two type I and two type II keratins.

In Xenopus laevis (African clawed frog), this protein is Keratin, type I cytoskeletal 47 kDa (xk81b1).